A 117-amino-acid polypeptide reads, in one-letter code: Putative phosphotransferase enzyme IIB component MG129 (117 aa).

A helical membrane pass occupies residues 1-21; it reads MKWLLWLGYIFSFGLLYLWIV. One can recognise a PTS EIIB type-1 domain in the interval 42 to 117; sequence PFKVKDFVSA…ELKKKIEDEQ (76 aa).

Its subcellular location is the membrane. Functionally, the phosphoenolpyruvate-dependent sugar phosphotransferase system (PTS), a major carbohydrate active -transport system, catalyzes the phosphorylation of incoming sugar substrates concomitant with their translocation across the cell membrane. The sequence is that of Putative phosphotransferase enzyme IIB component MG129 from Mycoplasma genitalium (strain ATCC 33530 / DSM 19775 / NCTC 10195 / G37) (Mycoplasmoides genitalium).